Consider the following 108-residue polypeptide: FK506-binding protein 1A (108 aa).

The tract at residues 1 to 20 is disordered; that stretch reads MGVEVQRISPGDGKNFPKPG. The PPIase FKBP-type domain maps to 20-108; the sequence is GDTVSIHYTG…TFEVELLKIN (89 aa).

This sequence belongs to the FKBP-type PPIase family. FKBP1 subfamily.

It is found in the cytoplasm. It carries out the reaction [protein]-peptidylproline (omega=180) = [protein]-peptidylproline (omega=0). With respect to regulation, inhibited by both FK506 and rapamycin. In terms of biological role, PPIases accelerate the folding of proteins. It catalyzes the cis-trans isomerization of proline imidic peptide bonds in oligopeptides. This chain is FK506-binding protein 1A (fprA), found in Emericella nidulans (strain FGSC A4 / ATCC 38163 / CBS 112.46 / NRRL 194 / M139) (Aspergillus nidulans).